Consider the following 292-residue polypeptide: Glycine--tRNA ligase alpha subunit (292 aa).

The protein belongs to the class-II aminoacyl-tRNA synthetase family. As to quaternary structure, tetramer of two alpha and two beta subunits.

It localises to the cytoplasm. The enzyme catalyses tRNA(Gly) + glycine + ATP = glycyl-tRNA(Gly) + AMP + diphosphate. The chain is Glycine--tRNA ligase alpha subunit from Clostridioides difficile (strain 630) (Peptoclostridium difficile).